The following is a 1044-amino-acid chain: Protein ITPRID1 (1044 aa).

Over residues 1 to 14 the composition is skewed to polar residues; it reads MMAQKSQGSDNLQE. Disordered stretches follow at residues 1–20, 230–251, 388–489, and 583–607; these read MMAQ…EKSK, EEKA…EHRR, MEEV…SSQE, and PEGA…HTQD. Residues 388 to 398 are compositionally biased toward acidic residues; that stretch reads MEEVQSFEEET. 2 stretches are compositionally biased toward polar residues: residues 460 to 469 and 480 to 489; these read HSLVSSQDCQ and RASMSFSSQE. Residues 896–937 adopt a coiled-coil conformation; it reads SRDMSEEEREEAEQLQTLREALRQQVAELEFQLGDRAQQIRE.

This is Protein ITPRID1 from Homo sapiens (Human).